Reading from the N-terminus, the 234-residue chain is Thiamine-phosphate synthase (234 aa).

Residues 52–56 (QYRSK) and Asn84 contribute to the 4-amino-2-methyl-5-(diphosphooxymethyl)pyrimidine site. 2 residues coordinate Mg(2+): Asp85 and Asp104. A 4-amino-2-methyl-5-(diphosphooxymethyl)pyrimidine-binding site is contributed by Ser123. 2-[(2R,5Z)-2-carboxy-4-methylthiazol-5(2H)-ylidene]ethyl phosphate is bound at residue 150-152 (SVT). Position 153 (Lys153) interacts with 4-amino-2-methyl-5-(diphosphooxymethyl)pyrimidine. Gly180 contributes to the 2-[(2R,5Z)-2-carboxy-4-methylthiazol-5(2H)-ylidene]ethyl phosphate binding site.

Belongs to the thiamine-phosphate synthase family. Mg(2+) is required as a cofactor.

It catalyses the reaction 2-[(2R,5Z)-2-carboxy-4-methylthiazol-5(2H)-ylidene]ethyl phosphate + 4-amino-2-methyl-5-(diphosphooxymethyl)pyrimidine + 2 H(+) = thiamine phosphate + CO2 + diphosphate. The catalysed reaction is 2-(2-carboxy-4-methylthiazol-5-yl)ethyl phosphate + 4-amino-2-methyl-5-(diphosphooxymethyl)pyrimidine + 2 H(+) = thiamine phosphate + CO2 + diphosphate. The enzyme catalyses 4-methyl-5-(2-phosphooxyethyl)-thiazole + 4-amino-2-methyl-5-(diphosphooxymethyl)pyrimidine + H(+) = thiamine phosphate + diphosphate. It participates in cofactor biosynthesis; thiamine diphosphate biosynthesis; thiamine phosphate from 4-amino-2-methyl-5-diphosphomethylpyrimidine and 4-methyl-5-(2-phosphoethyl)-thiazole: step 1/1. Functionally, condenses 4-methyl-5-(beta-hydroxyethyl)thiazole monophosphate (THZ-P) and 2-methyl-4-amino-5-hydroxymethyl pyrimidine pyrophosphate (HMP-PP) to form thiamine monophosphate (TMP). This Nitrosospira multiformis (strain ATCC 25196 / NCIMB 11849 / C 71) protein is Thiamine-phosphate synthase.